The chain runs to 237 residues: UPF0174 protein YaaW (237 aa).

This sequence belongs to the UPF0174 family.

The protein is UPF0174 protein YaaW (yaaW) of Escherichia coli (strain K12).